The chain runs to 167 residues: Transmembrane protein B169L (167 aa).

2 helical membrane passes run 28 to 48 and 60 to 80; these read NPFI…FAIC and TAIY…YVLN. N88 carries N-linked (GlcNAc...) asparagine; by host glycosylation.

The protein belongs to the asfivirus B169L family.

Its subcellular location is the host membrane. It localises to the virion. The sequence is that of Transmembrane protein B169L from African swine fever virus (isolate Tick/Malawi/Lil 20-1/1983) (ASFV).